A 426-amino-acid chain; its full sequence is 26S proteasome regulatory subunit 7B (426 aa).

Residue 209-216 (GPPGTGKT) participates in ATP binding.

It belongs to the AAA ATPase family.

The protein resides in the cytoplasm. Its subcellular location is the nucleus. The 26S proteasome is involved in the ATP-dependent degradation of ubiquitinated proteins. The regulatory (or ATPase) complex confers ATP dependency and substrate specificity to the 26S complex. This Oryza sativa subsp. japonica (Rice) protein is 26S proteasome regulatory subunit 7B (RPT1B).